We begin with the raw amino-acid sequence, 460 residues long: U-box domain-containing protein 9 (460 aa).

The U-box domain maps to 73 to 147; it reads SCPEEFRCPL…SKWCKKNGLE (75 aa). 3 ARM repeats span residues 201–244, 248–287, and 289–328; these read TEFR…NISI, SNKKLVCENPNVIPLLIDALRRGTVATRSNAAAAIFTLSA, and DSNKVLIGKSGILKPLIDLLEEGNPLAIKDVAAAIFTLCI.

As to quaternary structure, binds to SD11, SD16, SD17, SD18, SD113, SD129 and SD25. Post-translationally, phosphorylated by SD1-6 and SD1-7.

It is found in the nucleus. It localises to the cell membrane. The catalysed reaction is S-ubiquitinyl-[E2 ubiquitin-conjugating enzyme]-L-cysteine + [acceptor protein]-L-lysine = [E2 ubiquitin-conjugating enzyme]-L-cysteine + N(6)-ubiquitinyl-[acceptor protein]-L-lysine.. It functions in the pathway protein modification; protein ubiquitination. Functions as an E3 ubiquitin ligase. May be involved in the abscisic acid-mediated signaling pathway, at least during germination. The sequence is that of U-box domain-containing protein 9 (PUB9) from Arabidopsis thaliana (Mouse-ear cress).